The following is a 103-amino-acid chain: Large ribosomal subunit protein uL24 (103 aa).

The protein belongs to the universal ribosomal protein uL24 family. In terms of assembly, part of the 50S ribosomal subunit.

In terms of biological role, one of two assembly initiator proteins, it binds directly to the 5'-end of the 23S rRNA, where it nucleates assembly of the 50S subunit. One of the proteins that surrounds the polypeptide exit tunnel on the outside of the subunit. The polypeptide is Large ribosomal subunit protein uL24 (Haemophilus ducreyi (strain 35000HP / ATCC 700724)).